The following is a 327-amino-acid chain: MCSVKPKYISLPEQNSLCSLPNSGCCQVEVKIGRSKWEQQKAILVKVDGEPAGKIFIYSQPLIGQMYPLHELKSMGVICEKAGDFLVNLVTERGLKLTFKPIGSTANCFVTALVSGNFTSLTHETHIKTPLQNQEATTSPTIESDLTDKPDTNVYTGSREGYVAPSEKGSNEKKKEVVPNGGDKSVENKKGSDRNVKKTPSKTVTKPLLSESRKRKEAKTLATTQSQDLPAPTKDEPERTNSEPDNGEQEKIKKEKKKGTETSLKDGKNKLNEKIVKPAPTTTPDAGNGGLTPGKEDNKKTVTTSSVEIEVPEKKKAVENAGIIKIS.

Positions 129–306 (TPLQNQEATT…DNKKTVTTSS (178 aa)) are disordered. The segment covering 130–144 (PLQNQEATTSPTIES) has biased composition (polar residues). Basic and acidic residues-rich tracts occupy residues 184 to 196 (KSVENKKGSDRNV) and 233 to 276 (TKDE…EKIV).

This is an uncharacterized protein from Caenorhabditis elegans.